The chain runs to 598 residues: Arylsulfate sulfotransferase AssT (598 aa).

A signal peptide spans 1–27 (MFDKYRKTLVAGTVAITLGLSASGVMA). Positions 279 and 383 each coordinate 4-methylumbelliferone. A disulfide bridge links cysteine 445 with cysteine 451. 4-methylumbelliferone is bound at residue histidine 463. Residue histidine 463 is the Nucleophile; sulfurylated histidine covalent intermediate of the active site.

The protein belongs to the aryl sulfotransferase family. As to quaternary structure, homodimer. Post-translationally, the disulfide bond is crucial for enzyme activity.

Its subcellular location is the periplasm. It carries out the reaction an aryl sulfate + a phenol = an aryl sulfate + a phenol. It catalyses the reaction 4-methylumbelliferone sulfate + phenol = phenyl sulfate + 4-methylumbelliferone. Functionally, catalyzes the transfer of a sulfate group from a phenyl sulfate ester to other phenolic compounds. In vitro, is able to use 4-methylumbelliferyl sulfate and p-nitrophenyl sulfate (PNS) as donor substrates with phenol as the acceptor substrate. Cannot use 3'-phosphoadenosine-5'-phophosulfate (PAPS), the donor substrate of mammalian sulfotransferase. The polypeptide is Arylsulfate sulfotransferase AssT (Escherichia coli O6:H1 (strain CFT073 / ATCC 700928 / UPEC)).